A 347-amino-acid polypeptide reads, in one-letter code: MKPPIFIIIMTTVISGTMMVLISSHWLLIWIGFEMNMLAIIPILMKKFNPRAMEASTKYFLTQATASMILMLGIIINLLYSGQWTMLHTPNPMASNMMTIALTMKLGLSPFHFWVPEVTQGISLSSGMILLTWQKIAPLSVLYQMAPSINPNLLMSMAIMSMLVAGWGGLNQTQLRKILAYSSIGHMGWMTSITVYNPTLMHLNLVMYIMMTLGTFMLFMYNSSLTTLSLSYSWNKFPLTTLLILMLMLSLGGLPPLSGFIPKWMIIQELTKNNMIIIPTFMAIAALLSLYFYMRLTYTTALTMFPSMNNMKMKWQFENTKKITLLPPLIIMSTMLLPMTPMMLILY.

Transmembrane regions (helical) follow at residues Pro-3–Ser-23, His-25–Met-45, Tyr-59–Leu-79, Phe-111–Leu-131, Ile-149–Gly-169, Leu-200–Met-220, Leu-242–Pro-262, Asn-274–Met-294, and Leu-325–Ile-345.

It belongs to the complex I subunit 2 family. As to quaternary structure, core subunit of respiratory chain NADH dehydrogenase (Complex I) which is composed of 45 different subunits. Interacts with TMEM242.

The protein localises to the mitochondrion inner membrane. It carries out the reaction a ubiquinone + NADH + 5 H(+)(in) = a ubiquinol + NAD(+) + 4 H(+)(out). In terms of biological role, core subunit of the mitochondrial membrane respiratory chain NADH dehydrogenase (Complex I) which catalyzes electron transfer from NADH through the respiratory chain, using ubiquinone as an electron acceptor. Essential for the catalytic activity and assembly of complex I. The sequence is that of NADH-ubiquinone oxidoreductase chain 2 from Ailurus fulgens (Himalayan red panda).